The following is a 420-amino-acid chain: UDP-N-acetyl-D-mannosamine dehydrogenase (420 aa).

NAD(+)-binding residues include Y13, I14, D33, T85, and T126. Residues R160, V161, K212, N216, R219, H250, R252, and G263 each coordinate UDP-N-acetyl-alpha-D-mannosaminouronate. The active-site Proton donor/acceptor is the K212. C266 (nucleophile) is an active-site residue. UDP-N-acetyl-alpha-D-mannosaminouronate is bound by residues F330 and K331. Residue R338 coordinates NAD(+). K416 contacts UDP-N-acetyl-alpha-D-mannosaminouronate.

This sequence belongs to the UDP-glucose/GDP-mannose dehydrogenase family. WecC subfamily. In terms of assembly, homodimer.

The catalysed reaction is UDP-N-acetyl-alpha-D-mannosamine + 2 NAD(+) + H2O = UDP-N-acetyl-alpha-D-mannosaminouronate + 2 NADH + 3 H(+). It participates in bacterial outer membrane biogenesis; enterobacterial common antigen biosynthesis. Functionally, catalyzes the four-electron oxidation of UDP-N-acetyl-D-mannosamine (UDP-ManNAc), reducing NAD(+) and releasing UDP-N-acetylmannosaminuronic acid (UDP-ManNAcA). This Salmonella typhi protein is UDP-N-acetyl-D-mannosamine dehydrogenase.